A 947-amino-acid polypeptide reads, in one-letter code: Receptor-like protein 56 (947 aa).

A signal peptide spans 1 to 27 (MEGKVFSGQKLILVMLLLGHLHGFSSC). The Extracellular segment spans residues 28 to 899 (IEKERKALLE…EDDKEVAIDM (872 aa)). N-linked (GlcNAc...) asparagine glycans are attached at residues Asn-60, Asn-75, and Asn-98. LRR repeat units follow at residues 105-128 (FEEVRSLDLSNSRLNGLVDDVEGY), 134-157 (LRNLQILNFSSNEFNNSIFPFLNA), 159-182 (TSLTTLSLRRNNMYGPIPLKELKN), 183-207 (LTNLELLDLSGNRIDGSMPVREFPY), 209-232 (KKLKALDLSSNGIYSSMEWQGLKN), 233-257 (LTNLEVLSLGYNYFDGPIPIEVFCE), 259-281 (KNLQELDLRGINFVGQLPLCFGN), 282-305 (LNKLRFLDLSSNQLTGNIPPSFSS), and 307-330 (ESLEYLSLSDNSFEGFFSLNPLTN). N-linked (GlcNAc...) asparagine glycans are attached at residues Asn-141, Asn-148, and Asn-182. N-linked (GlcNAc...) asparagine glycosylation is present at Asn-232. Asn-330 carries N-linked (GlcNAc...) asparagine glycosylation. One copy of the LRR 10; degenerate repeat lies at 332–356 (TKLKVFIFSSKDDMVQVKIESTWQP). LRR repeat units lie at residues 357–380 (LFQLSVLVLRLCSLEKIPNFLMYQ), 381–404 (KNLHVVDLSGNRISGIIPTWLLEN), 405–427 (NPELEVLQLKNNSFTIFQMPTSV), 428–450 (HNLQVLDFSENNIGGLFPDNFGR), 452–476 (LPNLVHMNGSNNGFQGNFPSSMGEM), 477–500 (YNISFLDLSYNNLSGELPQSFVSS), 502–527 (FSLSILQLSHNKFSGHFLPRQTNFTS), 529–549 (IVLRINNNLFTGKIGVGLLTL), 550–575 (VDLCILDMSNNFLEGELPPLLLVFEY), 577–598 (NFLDLSGNLLSGALPSHVSLDN), 600–616 (LFLHNNNFTGPIPDTFL), 617–640 (GSIQILDLRNNKLSGNIPQFVDTQ), 642–663 (ISFLLLRGNSLTGYIPSTLCEF), 664–686 (SKMRLLDLSDNKLNGFIPSCFNN), 757–780 (LNSMYGLDLSSNELSGVIPAELGD), 781–804 (LFKLRALNLSHNFLSSHIPDSFSK), 805–829 (LQDIESLDLSYNMLQGSIPHQLTNL), and 831–854 (SLAIFNVSYNNLSGIIPQGKQFNT). Asn-415 is a glycosylation site (N-linked (GlcNAc...) asparagine). N-linked (GlcNAc...) asparagine glycosylation is found at Asn-459, Asn-478, Asn-488, and Asn-524. N-linked (GlcNAc...) asparagine glycosylation is present at Asn-606. An N-linked (GlcNAc...) asparagine glycan is attached at Asn-686. N-linked (GlcNAc...) asparagine glycans are attached at residues Asn-788, Asn-828, Asn-836, and Asn-841. A helical transmembrane segment spans residues 900–920 (LVFYWSTAGTYVTALIGILVL). Residues 921 to 947 (MCVDCSWRRAWLRLVDAFIASAKSKLA) are Cytoplasmic-facing.

This sequence belongs to the RLP family.

The protein localises to the cell membrane. This Arabidopsis thaliana (Mouse-ear cress) protein is Receptor-like protein 56.